The primary structure comprises 324 residues: Cyclic GMP-AMP synthase CdnE03 (324 aa).

Positions 87 and 89 each coordinate Mg(2+). Residues Asp-89, 144 to 145, and Asp-159 contribute to the ATP site; that span reads NK. Asp-159 lines the Mg(2+) pocket. Positions 224 and 243 each coordinate GTP.

Belongs to the CD-NTase family. E03 subfamily. Mg(2+) serves as cofactor.

It carries out the reaction GTP + ATP = 3',2'-cGAMP + 2 diphosphate. Activated by a virus-derived, approximately 400 nucleotide RNA (called CBASS-activating bacteriophage RNA, cabRNA) that begins in the viral terminase subunit terS and extends into terL. RNA secondary and/or tertiary structure, as well as viral infection itself, are important for CdnE activation. A much longer RNA (escaper RNA) with a different secondary structure, derived from a terS-mutated virus still binds to this protein, but does not activate its nucleotide cyclase activity. Shorter viral-derived RNAs (34 and 49 nt) with extensive predicted secondary structure also activate the enzyme, although not as well as full-length cabRNA. Its function is as follows. Cyclic nucleotide synthase (second messenger synthase) of a CBASS antivirus system. CBASS (cyclic oligonucleotide-based antiphage signaling system) provides immunity against bacteriophage. The CD-NTase protein synthesizes cyclic nucleotides in response to infection; these serve as specific second messenger signals. The signals activate a diverse range of effectors, leading to bacterial cell death and thus abortive phage infection. The effector for this system is downstream Cap15. A type I-B CBASS system. Cyclic dinucleotide synthase that catalyzes the synthesis of 3',2'-cyclic GMP-AMP (cGAMP) from GTP and ATP upon activation by viral-derived cabRNA. Binds cabRNA via positive charges in its N-terminus. In terms of biological role, protects S.aureus against phage infection. When the CBASS operon (cdnE-cap15) is introduced in S.aureus strain RN4220 there is strong protection against lytic DNA phages 80alpha-vir and phi-NM1-gamma-6 but little to no protection against phages phi-NM4-gamma-4 or phi-12-gamma-3. The protein is Cyclic GMP-AMP synthase CdnE03 of Staphylococcus schleiferi.